The following is an 83-amino-acid chain: Spanin, outer lipoprotein subunit (83 aa).

The signal sequence occupies residues 1-50; that stretch reads MSTLRELRLRRALKEQSMRYLLSIKKTLPRWKGALIGLFLICVATISGCA.

The protein belongs to the T7likevirus o-spanin family. In terms of assembly, homodimer. Interacts (via C-terminus) with the spanin inner membrane subunit (via C-terminus). Part of the spanin complex which spans the entire periplasmic space. The spanin complex is composed of spanin inner membrane subunit and spanin outer membrane subunit.

Its subcellular location is the host cell outer membrane. Functionally, component of the spanin complex that disrupts the host outer membrane and participates in cell lysis during virus exit. The spanin complex conducts the final step in host lysis by disrupting the outer membrane after holin and endolysin action have permeabilized the inner membrane and degraded the host peptidoglycans. Host outer membrane disruption is possibly due to local fusion between the inner and outer membrane performed by the spanin complex. In Escherichia phage T7 (Bacteriophage T7), this protein is Spanin, outer lipoprotein subunit.